The primary structure comprises 78 residues: Large ribosomal subunit protein bL28 (78 aa).

The protein belongs to the bacterial ribosomal protein bL28 family.

The sequence is that of Large ribosomal subunit protein bL28 from Histophilus somni (strain 129Pt) (Haemophilus somnus).